We begin with the raw amino-acid sequence, 561 residues long: Oligo-1,6-glucosidase 1 (561 aa).

Positions 20, 22, 24, 26, and 28 each coordinate Ca(2+). Residue Asp199 is the Nucleophile of the active site. Catalysis depends on Glu255, which acts as the Proton donor.

Belongs to the glycosyl hydrolase 13 family.

The protein resides in the cytoplasm. It carries out the reaction Hydrolysis of (1-&gt;6)-alpha-D-glucosidic linkages in some oligosaccharides produced from starch and glycogen by alpha-amylase, and in isomaltose.. Its function is as follows. Hydrolyzes various disaccharides such as sucrose, maltose, and isomaltose with different efficiencies. Also hydrolyzes longer maltodextrins from maltotriose up to maltohexaose, but not maltoheptaose, palatinose, isomaltotriose, or isomaltotetraose. The sequence is that of Oligo-1,6-glucosidase 1 (malL) from Bacillus subtilis (strain 168).